The following is a 162-amino-acid chain: Ribosome maturation factor RimP (162 aa).

Belongs to the RimP family.

The protein localises to the cytoplasm. Its function is as follows. Required for maturation of 30S ribosomal subunits. The polypeptide is Ribosome maturation factor RimP (Ralstonia nicotianae (strain ATCC BAA-1114 / GMI1000) (Ralstonia solanacearum)).